We begin with the raw amino-acid sequence, 824 residues long: Leucine--tRNA ligase (824 aa).

Positions P42–H52 match the 'HIGH' region motif. The short motif at K581 to S585 is the 'KMSKS' region element. K584 contributes to the ATP binding site.

Belongs to the class-I aminoacyl-tRNA synthetase family.

It is found in the cytoplasm. It catalyses the reaction tRNA(Leu) + L-leucine + ATP = L-leucyl-tRNA(Leu) + AMP + diphosphate. This chain is Leucine--tRNA ligase, found in Geotalea uraniireducens (strain Rf4) (Geobacter uraniireducens).